A 283-amino-acid chain; its full sequence is Thymidylate synthase (283 aa).

Arg22 is a dUMP binding site. The Nucleophile role is filled by Cys160. DUMP is bound by residues 180–183 (RSCD), Asn191, and 221–223 (HIY). Asp183 provides a ligand contact to (6R)-5,10-methylene-5,6,7,8-tetrahydrofolate. Residue Ser282 participates in (6R)-5,10-methylene-5,6,7,8-tetrahydrofolate binding.

The protein belongs to the thymidylate synthase family. Bacterial-type ThyA subfamily. In terms of assembly, homodimer.

It is found in the cytoplasm. It carries out the reaction dUMP + (6R)-5,10-methylene-5,6,7,8-tetrahydrofolate = 7,8-dihydrofolate + dTMP. It functions in the pathway pyrimidine metabolism; dTTP biosynthesis. Its function is as follows. Catalyzes the reductive methylation of 2'-deoxyuridine-5'-monophosphate (dUMP) to 2'-deoxythymidine-5'-monophosphate (dTMP) while utilizing 5,10-methylenetetrahydrofolate (mTHF) as the methyl donor and reductant in the reaction, yielding dihydrofolate (DHF) as a by-product. This enzymatic reaction provides an intracellular de novo source of dTMP, an essential precursor for DNA biosynthesis. In Vibrio cholerae serotype O1 (strain ATCC 39315 / El Tor Inaba N16961), this protein is Thymidylate synthase.